Reading from the N-terminus, the 351-residue chain is Selenide, water dikinase (351 aa).

Cysteine 20 is a catalytic residue. Residues lysine 23 and 51–53 (TKD) each bind ATP. Residue aspartate 54 participates in Mg(2+) binding. Residues aspartate 71, aspartate 94, and 142–144 (GHS) contribute to the ATP site. Aspartate 94 contributes to the Mg(2+) binding site. Aspartate 230 contributes to the Mg(2+) binding site.

The protein belongs to the selenophosphate synthase 1 family. Class I subfamily. In terms of assembly, homodimer. Requires Mg(2+) as cofactor.

The catalysed reaction is hydrogenselenide + ATP + H2O = selenophosphate + AMP + phosphate + 2 H(+). In terms of biological role, synthesizes selenophosphate from selenide and ATP. This chain is Selenide, water dikinase, found in Pasteurella multocida (strain Pm70).